We begin with the raw amino-acid sequence, 441 residues long: Trigger factor (441 aa).

The region spanning 175–260 is the PPIase FKBP-type domain; the sequence is GDKVVIDYNS…LVSIMVPKDV (86 aa).

Belongs to the FKBP-type PPIase family. Tig subfamily.

The protein localises to the cytoplasm. It carries out the reaction [protein]-peptidylproline (omega=180) = [protein]-peptidylproline (omega=0). Functionally, involved in protein export. Acts as a chaperone by maintaining the newly synthesized protein in an open conformation. Functions as a peptidyl-prolyl cis-trans isomerase. The sequence is that of Trigger factor from Anaplasma marginale (strain St. Maries).